We begin with the raw amino-acid sequence, 122 residues long: Acidic phospholipase A2 2 (122 aa).

7 disulfides stabilise this stretch: C26–C115, C28–C44, C43–C95, C49–C122, C50–C88, C57–C81, and C75–C86. Ca(2+) is bound by residues Y27, G29, and G31. The active site involves H47. Position 48 (D48) interacts with Ca(2+). D89 is an active-site residue.

Belongs to the phospholipase A2 family. Group II subfamily. D49 sub-subfamily. Requires Ca(2+) as cofactor. In terms of tissue distribution, expressed by the venom gland.

It is found in the secreted. It catalyses the reaction a 1,2-diacyl-sn-glycero-3-phosphocholine + H2O = a 1-acyl-sn-glycero-3-phosphocholine + a fatty acid + H(+). Snake venom phospholipase A2 (PLA2) that has high lipolytic activity. PLA2 catalyzes the calcium-dependent hydrolysis of the 2-acyl groups in 3-sn-phosphoglycerides. The protein is Acidic phospholipase A2 2 of Craspedocephalus gramineus (Bamboo pit viper).